A 435-amino-acid polypeptide reads, in one-letter code: Methylenetetrahydrofolate--tRNA-(uracil-5-)-methyltransferase TrmFO (435 aa).

Residue G9–G14 coordinates FAD.

This sequence belongs to the MnmG family. TrmFO subfamily. It depends on FAD as a cofactor.

It localises to the cytoplasm. The enzyme catalyses uridine(54) in tRNA + (6R)-5,10-methylene-5,6,7,8-tetrahydrofolate + NADH + H(+) = 5-methyluridine(54) in tRNA + (6S)-5,6,7,8-tetrahydrofolate + NAD(+). It catalyses the reaction uridine(54) in tRNA + (6R)-5,10-methylene-5,6,7,8-tetrahydrofolate + NADPH + H(+) = 5-methyluridine(54) in tRNA + (6S)-5,6,7,8-tetrahydrofolate + NADP(+). Its function is as follows. Catalyzes the folate-dependent formation of 5-methyl-uridine at position 54 (M-5-U54) in all tRNAs. This Staphylococcus aureus (strain JH1) protein is Methylenetetrahydrofolate--tRNA-(uracil-5-)-methyltransferase TrmFO.